Consider the following 262-residue polypeptide: Homeobox protein Nkx-6.3 (262 aa).

Positions 140–199 form a DNA-binding region, homeobox; sequence KKHTRPTFTGHQIFALEKTFEQTKYLAGPERARLAYSLGMTESQVKVWFQNRRTKWRKKS. Residues 197–237 are disordered; the sequence is KKSALEPSSSTPRAPGGASGDRAASENEDDEYNKPLDPDSD.

As to expression, expressed in the developing CNS and gastro-intestinal tract.

The protein resides in the nucleus. Functionally, putative transcription factor, which may be involved in patterning of central nervous system and pancreas. In Mus musculus (Mouse), this protein is Homeobox protein Nkx-6.3 (Nkx6-3).